The following is a 404-amino-acid chain: Cysteine desulfurase IscS (404 aa).

Pyridoxal 5'-phosphate is bound by residues 75–76, Asn-155, Gln-183, and 203–205; these read AT and SGH. Lys-206 carries the post-translational modification N6-(pyridoxal phosphate)lysine. Thr-243 is a binding site for pyridoxal 5'-phosphate. Cys-328 (cysteine persulfide intermediate) is an active-site residue. Position 328 (Cys-328) interacts with [2Fe-2S] cluster.

This sequence belongs to the class-V pyridoxal-phosphate-dependent aminotransferase family. NifS/IscS subfamily. In terms of assembly, homodimer. Forms a heterotetramer with IscU, interacts with other sulfur acceptors. Requires pyridoxal 5'-phosphate as cofactor.

Its subcellular location is the cytoplasm. The catalysed reaction is (sulfur carrier)-H + L-cysteine = (sulfur carrier)-SH + L-alanine. It functions in the pathway cofactor biosynthesis; iron-sulfur cluster biosynthesis. Master enzyme that delivers sulfur to a number of partners involved in Fe-S cluster assembly, tRNA modification or cofactor biosynthesis. Catalyzes the removal of elemental sulfur atoms from cysteine to produce alanine. Functions as a sulfur delivery protein for Fe-S cluster synthesis onto IscU, an Fe-S scaffold assembly protein, as well as other S acceptor proteins. This is Cysteine desulfurase IscS from Shewanella baltica (strain OS155 / ATCC BAA-1091).